The sequence spans 85 residues: Putative membrane protein insertion efficiency factor (85 aa).

It belongs to the UPF0161 family.

The protein localises to the cell inner membrane. Its function is as follows. Could be involved in insertion of integral membrane proteins into the membrane. The sequence is that of Putative membrane protein insertion efficiency factor from Fervidobacterium nodosum (strain ATCC 35602 / DSM 5306 / Rt17-B1).